The chain runs to 60 residues: UPF0434 protein YE1549 (60 aa).

This sequence belongs to the UPF0434 family.

The protein is UPF0434 protein YE1549 of Yersinia enterocolitica serotype O:8 / biotype 1B (strain NCTC 13174 / 8081).